A 182-amino-acid polypeptide reads, in one-letter code: Flavin prenyltransferase UbiX (182 aa).

Residues 9–11, serine 35, 86–89, and arginine 121 each bind FMN; these read GAS and SIKT. Tyrosine 151 and arginine 167 together coordinate dimethylallyl phosphate.

This sequence belongs to the UbiX/PAD1 family.

It carries out the reaction dimethylallyl phosphate + FMNH2 = prenylated FMNH2 + phosphate. Flavin prenyltransferase that catalyzes the synthesis of the prenylated FMN cofactor (prenyl-FMN) for 4-hydroxy-3-polyprenylbenzoic acid decarboxylase UbiD. The prenyltransferase is metal-independent and links a dimethylallyl moiety from dimethylallyl monophosphate (DMAP) to the flavin N5 and C6 atoms of FMN. The sequence is that of Flavin prenyltransferase UbiX from Archaeoglobus fulgidus (strain ATCC 49558 / DSM 4304 / JCM 9628 / NBRC 100126 / VC-16).